The primary structure comprises 250 residues: Isoprenyl transferase (250 aa).

The active site involves Asp27. Asp27 is a Mg(2+) binding site. Substrate is bound by residues 28 to 31, Trp32, His48, and 76 to 78; these read GNRR and STE. Asn79 serves as the catalytic Proton acceptor. Substrate contacts are provided by residues Phe80, Arg82, Arg199, and 205–207; that span reads RVS. A Mg(2+)-binding site is contributed by Glu218.

It belongs to the UPP synthase family. As to quaternary structure, homodimer. Requires Mg(2+) as cofactor.

Its function is as follows. Catalyzes the condensation of isopentenyl diphosphate (IPP) with allylic pyrophosphates generating different type of terpenoids. This chain is Isoprenyl transferase, found in Chlamydia caviae (strain ATCC VR-813 / DSM 19441 / 03DC25 / GPIC) (Chlamydophila caviae).